The following is a 100-amino-acid chain: Small ribosomal subunit protein uS14c (100 aa).

It belongs to the universal ribosomal protein uS14 family. Part of the 30S ribosomal subunit.

Its subcellular location is the plastid. The protein localises to the chloroplast. Its function is as follows. Binds 16S rRNA, required for the assembly of 30S particles. This chain is Small ribosomal subunit protein uS14c, found in Arabis hirsuta (Hairy rock-cress).